Consider the following 169-residue polypeptide: Cell division inhibitor SulA (169 aa).

Positions 1–22 are disordered; sequence MHTSIYANRSTSFSPSAGNDTQ. The interval 106–112 is ftsZ binding; it reads ALRTGNY. The interval 162 to 169 is lon protease binding; sequence KIHSNLYH.

This sequence belongs to the SulA family. Interacts with FtsZ. In terms of processing, is rapidly cleaved and degraded by the Lon protease once DNA damage is repaired.

Functionally, component of the SOS system and an inhibitor of cell division. Accumulation of SulA causes rapid cessation of cell division and the appearance of long, non-septate filaments. In the presence of GTP, binds a polymerization-competent form of FtsZ in a 1:1 ratio, thus inhibiting FtsZ polymerization and therefore preventing it from participating in the assembly of the Z ring. This mechanism prevents the premature segregation of damaged DNA to daughter cells during cell division. The chain is Cell division inhibitor SulA from Enterobacter sp. (strain 638).